We begin with the raw amino-acid sequence, 153 residues long: Late embryogenesis abundant protein B19.4 (153 aa).

The segment at 1–153 (MASGQQERSE…IDESKFKTKS (153 aa)) is disordered. 3 stretches are compositionally biased toward basic and acidic residues: residues 7–19 (ERSELDRMAREGE), 32–122 (EAQE…EMGR), and 133–153 (GGERAAREGIDIDESKFKTKS). Tandem repeats lie at residues 43-62 (RGGQTRKEQLGEEGYREMGH), 63-82 (KGGETRKEQLGEEGYREMGH), 83-102 (KGGETRKEQLGEEGYREMGH), and 103-122 (KGGETRKEQMGEEGYREMGR). Positions 43–122 (RGGQTRKEQL…GEEGYREMGR (80 aa)) are 4 X 20 AA tandem repeats.

It belongs to the small hydrophilic plant seed protein family.

Its function is as follows. Lea proteins are late embryonic proteins abundant in higher plant seed embryos. This chain is Late embryogenesis abundant protein B19.4 (B19.4), found in Hordeum vulgare (Barley).